The sequence spans 521 residues: GMP synthase [glutamine-hydrolyzing] (521 aa).

In terms of domain architecture, Glutamine amidotransferase type-1 spans 10 to 204 (SLLILDFGSQ…ALGICGCEND (195 aa)). Cysteine 87 functions as the Nucleophile in the catalytic mechanism. Residues histidine 178 and glutamate 180 contribute to the active site. Residues 205 to 396 (WNMHNFAEEQ…LGMPREMLMR (192 aa)) form the GMPS ATP-PPase domain. 232–238 (SGGVDSS) is a binding site for ATP.

As to quaternary structure, homodimer.

It catalyses the reaction XMP + L-glutamine + ATP + H2O = GMP + L-glutamate + AMP + diphosphate + 2 H(+). It functions in the pathway purine metabolism; GMP biosynthesis; GMP from XMP (L-Gln route): step 1/1. Catalyzes the synthesis of GMP from XMP. This chain is GMP synthase [glutamine-hydrolyzing], found in Wolinella succinogenes (strain ATCC 29543 / DSM 1740 / CCUG 13145 / JCM 31913 / LMG 7466 / NCTC 11488 / FDC 602W) (Vibrio succinogenes).